The chain runs to 204 residues: Small heat shock protein, chloroplastic (204 aa).

Residues 34 to 55 (QMGRVDHDHELDDRSNRAPISR) are disordered. A compositionally biased stretch (basic and acidic residues) spans 37 to 49 (RVDHDHELDDRSN). Residues 98–204 (GSGRAMRRGW…KKDVFQVMVD (107 aa)) enclose the sHSP domain.

Belongs to the small heat shock protein (HSP20) family.

It is found in the plastid. The protein resides in the chloroplast stroma. This Oxybasis rubra (Red goosefoot) protein is Small heat shock protein, chloroplastic (HSP23).